The chain runs to 207 residues: Small ribosomal subunit protein uS4 (207 aa).

Positions Lys31–Asn54 are disordered. Positions Gly42–Gly53 are enriched in polar residues. An S4 RNA-binding domain is found at Ser97–Glu158.

Belongs to the universal ribosomal protein uS4 family. In terms of assembly, part of the 30S ribosomal subunit. Contacts protein S5. The interaction surface between S4 and S5 is involved in control of translational fidelity.

Its function is as follows. One of the primary rRNA binding proteins, it binds directly to 16S rRNA where it nucleates assembly of the body of the 30S subunit. In terms of biological role, with S5 and S12 plays an important role in translational accuracy. This Polynucleobacter asymbioticus (strain DSM 18221 / CIP 109841 / QLW-P1DMWA-1) (Polynucleobacter necessarius subsp. asymbioticus) protein is Small ribosomal subunit protein uS4.